Here is a 680-residue protein sequence, read N- to C-terminus: Tumor protein 63 (680 aa).

The transcription activation stretch occupies residues 1 to 107; it reads MNFETSRCAT…MQDSDLSDPM (107 aa). Residues 123–157 are compositionally biased toward polar residues; it reads QIQNGSSSTSPYNTDHAQNSVTAPSPYAQPSSTFD. The segment at 123 to 171 is disordered; that stretch reads QIQNGSSSTSPYNTDHAQNSVTAPSPYAQPSSTFDALSPSPAIPSNTDY. Residues 170–362 mediate DNA binding; that stretch reads DYPGPHSFDV…KADEDSIRKQ (193 aa). Cys244, His247, Cys308, and Cys312 together coordinate Zn(2+). Over residues 351–360 the composition is skewed to basic and acidic residues; it reads DRKADEDSIR. Disordered stretches follow at residues 351-393 and 436-472; these read DRKA…IKKR and RQQQQQQHQHLLQKQTSMQSQSSYGNSSPPLNKMNSM. Residues 352-388 form an interaction with HIPK2 region; that stretch reads RKADEDSIRKQQVSDSAKNGDGTKRPFRQNTHGIQMT. A compositionally biased stretch (polar residues) spans 379 to 389; it reads RQNTHGIQMTS. The oligomerization stretch occupies residues 394–443; that stretch reads RSPDDELLYLPVRGRETYEMLLKIKESLELMQYLPQHTIETYRQQQQQQH. A compositionally biased stretch (low complexity) spans 437 to 463; it reads QQQQQQHQHLLQKQTSMQSQSSYGNSS. The SAM domain maps to 541–607; sequence PPYPTDCSIV…WKGILDHRQL (67 aa). The tract at residues 610–680 is transactivation inhibition; that stretch reads FSSPPHLLRT…KQQRIKEEGE (71 aa). A Glycyl lysine isopeptide (Lys-Gly) (interchain with G-Cter in SUMO) cross-link involves residue Lys676.

Belongs to the p53 family. In terms of assembly, binds DNA as a homotetramer. Isoform composition of the tetramer may determine transactivation activity. Interacts with HIPK2. Interacts with SSRP1, leading to stimulate coactivator activity. Interacts with PDS5A. Interacts (via activation domain) with NOC2L. Interacts with WWP1. Zn(2+) serves as cofactor. May be sumoylated. Post-translationally, ubiquitinated. Polyubiquitination involves WWP1 and leads to proteasomal degradation of this protein. In terms of tissue distribution, widely expressed, notably in thymus, prostate, placenta and skeletal muscle, although the precise isoform varies according to tissue type. Progenitor cell layers of skin, breast and prostate express high levels of DeltaN-type isoforms.

It localises to the nucleus. Acts as a sequence specific DNA binding transcriptional activator or repressor. The isoforms contain a varying set of transactivation and auto-regulating transactivation inhibiting domains thus showing an isoform specific activity. May be required in conjunction with TP73/p73 for initiation of p53/TP53 dependent apoptosis in response to genotoxic insults and the presence of activated oncogenes. Involved in Notch signaling by probably inducing JAG1 and JAG2. Activates transcription of the p21 promoter. Activates RIPK4 transcription. Plays a role in the regulation of epithelial morphogenesis. The ratio of DeltaN-type and TA*-type isoforms may govern the maintenance of epithelial stem cell compartments and regulate the initiation of epithelial stratification from the undifferentiated embryonal ectoderm. Required for limb formation from the apical ectodermal ridge. The chain is Tumor protein 63 (Tp63) from Mus musculus (Mouse).